The primary structure comprises 226 residues: 7-cyano-7-deazaguanine synthase (226 aa).

11–21 lines the ATP pocket; it reads LSGGLDSATCL. Zn(2+)-binding residues include Cys191, Cys201, Cys204, and Cys207.

It belongs to the QueC family. Requires Zn(2+) as cofactor.

It catalyses the reaction 7-carboxy-7-deazaguanine + NH4(+) + ATP = 7-cyano-7-deazaguanine + ADP + phosphate + H2O + H(+). The protein operates within purine metabolism; 7-cyano-7-deazaguanine biosynthesis. Functionally, catalyzes the ATP-dependent conversion of 7-carboxy-7-deazaguanine (CDG) to 7-cyano-7-deazaguanine (preQ(0)). The protein is 7-cyano-7-deazaguanine synthase of Aromatoleum aromaticum (strain DSM 19018 / LMG 30748 / EbN1) (Azoarcus sp. (strain EbN1)).